A 405-amino-acid polypeptide reads, in one-letter code: MSTEKSLLANAAGGSLVLQIFVGIIAGVALAGFSPEAANQVAFLGDLFVGALKAIAPVLVFVLVASSIANQVSGAQTNMRPIILLYLVGTFAAALTAVLMSFAFPTSLVLIDAAAGANPPEGIGQVLNTLLFKLVDNPVNALINANYIGLLAWGVGLGIALRHASTSTKNMLHDVSHGVSQLVRFVICLAPIGIFGLVAATIAQTGFEALAAYAQLLGVLLGAMAVIAFVVNPLIVFLKIRRNPYPLVFKCLRESGVTAFFTRSSAANIPVNMALCERLKLHEDTYSVSIPLGATINMAGAAITITVLTLAAVHTLGIEVDLATALLLSVIAAVSACGASGVAGGSLLLIPLACSLFGISNDIAMQVVAVGFTIGVIQDSAETALNSSTDVLFTAAACEAAERKA.

8 helical membrane-spanning segments follow: residues 13–33 (GGSLVLQIFVGIIAGVALAGF), 43–63 (FLGDLFVGALKAIAPVLVFVL), 82–102 (IILLYLVGTFAAALTAVLMSF), 141–161 (ALINANYIGLLAWGVGLGIAL), 185–205 (FVICLAPIGIFGLVAATIAQT), 217–237 (LGVLLGAMAVIAFVVNPLIVF), 298–318 (MAGAAITITVLTLAAVHTLGI), and 339–359 (ASGVAGGSLLLIPLACSLFGI).

It belongs to the dicarboxylate/amino acid:cation symporter (DAACS) (TC 2.A.23) family.

It localises to the cell inner membrane. It carries out the reaction L-serine(in) + Na(+)(in) = L-serine(out) + Na(+)(out). It catalyses the reaction L-threonine(in) + Na(+)(in) = L-threonine(out) + Na(+)(out). Involved in the import of serine and threonine into the cell, with the concomitant import of sodium (symport system). In Shewanella amazonensis (strain ATCC BAA-1098 / SB2B), this protein is Serine/threonine transporter SstT.